The primary structure comprises 196 residues: MLKEVVYCGVCTYPIDYCEFSGKLKRCKVWLKENHADLYDKLYSEDDAAAASLSAKLAESSIGEAREEKLEKDLQKLQTKQENKEQRELAKKLSSKVIVKREARTKRKYIVAISGLEVFEIDMKKLAKTFASKFATGCSVSKNAEKKEEVVVQGDVLDEVVAYIHSLLEEKGMKDVKVETIDTKKKKKPEATPAAK.

In terms of domain architecture, SUI1 spans 97–168; that stretch reads VIVKREARTK…EVVAYIHSLL (72 aa).

This sequence belongs to the DENR family. As to quaternary structure, interacts with the 40S ribosomal subunit.

The protein resides in the cytoplasm. The sequence is that of Translation machinery-associated protein 22 (TMA22) from Candida glabrata (strain ATCC 2001 / BCRC 20586 / JCM 3761 / NBRC 0622 / NRRL Y-65 / CBS 138) (Yeast).